Reading from the N-terminus, the 168-residue chain is ATP synthase subunit b (168 aa).

A helical transmembrane segment spans residues 9–29 (AIPFGTIAYTLFIFLILLVML).

Belongs to the ATPase B chain family. As to quaternary structure, F-type ATPases have 2 components, F(1) - the catalytic core - and F(0) - the membrane proton channel. F(1) has five subunits: alpha(3), beta(3), gamma(1), delta(1), epsilon(1). F(0) has three main subunits: a(1), b(2) and c(10-14). The alpha and beta chains form an alternating ring which encloses part of the gamma chain. F(1) is attached to F(0) by a central stalk formed by the gamma and epsilon chains, while a peripheral stalk is formed by the delta and b chains.

It is found in the cell membrane. Functionally, f(1)F(0) ATP synthase produces ATP from ADP in the presence of a proton or sodium gradient. F-type ATPases consist of two structural domains, F(1) containing the extramembraneous catalytic core and F(0) containing the membrane proton channel, linked together by a central stalk and a peripheral stalk. During catalysis, ATP synthesis in the catalytic domain of F(1) is coupled via a rotary mechanism of the central stalk subunits to proton translocation. Component of the F(0) channel, it forms part of the peripheral stalk, linking F(1) to F(0). The chain is ATP synthase subunit b from Bacillus cereus (strain G9842).